The chain runs to 435 residues: Adenylosuccinate synthetase (435 aa).

Residues 22-28 (GDEGKGK) and 50-52 (GHT) each bind GTP. The active-site Proton acceptor is Asp-23. 2 residues coordinate Mg(2+): Asp-23 and Gly-50. IMP is bound by residues 23–26 (DEGK), 48–51 (NAGH), Thr-140, Arg-154, Gln-235, Thr-250, and Arg-314. The Proton donor role is filled by His-51. 310–316 (ATTGRKR) contributes to the substrate binding site. GTP-binding positions include Arg-316, 342–344 (KLD), and 424–426 (SVG).

The protein belongs to the adenylosuccinate synthetase family. Homodimer. The cofactor is Mg(2+).

The protein resides in the cytoplasm. It catalyses the reaction IMP + L-aspartate + GTP = N(6)-(1,2-dicarboxyethyl)-AMP + GDP + phosphate + 2 H(+). The protein operates within purine metabolism; AMP biosynthesis via de novo pathway; AMP from IMP: step 1/2. Functionally, plays an important role in the de novo pathway of purine nucleotide biosynthesis. Catalyzes the first committed step in the biosynthesis of AMP from IMP. This is Adenylosuccinate synthetase from Chlorobaculum parvum (strain DSM 263 / NCIMB 8327) (Chlorobium vibrioforme subsp. thiosulfatophilum).